We begin with the raw amino-acid sequence, 310 residues long: Thioredoxin reductase (310 aa).

34 to 41 (NGMQPGGQ) contacts FAD. The cysteines at positions 135 and 138 are disulfide-linked. Residue 281–290 (DVQDKIYRQA) coordinates FAD.

Belongs to the class-II pyridine nucleotide-disulfide oxidoreductase family. Homodimer. The cofactor is FAD.

It localises to the cytoplasm. The catalysed reaction is [thioredoxin]-dithiol + NADP(+) = [thioredoxin]-disulfide + NADPH + H(+). The protein is Thioredoxin reductase (trxB) of Rickettsia conorii (strain ATCC VR-613 / Malish 7).